A 483-amino-acid polypeptide reads, in one-letter code: Glutamyl-tRNA(Gln) amidotransferase subunit A (483 aa).

Catalysis depends on charge relay system residues Lys77 and Ser152. Residue Ser176 is the Acyl-ester intermediate of the active site.

Belongs to the amidase family. GatA subfamily. As to quaternary structure, heterotrimer of A, B and C subunits.

It carries out the reaction L-glutamyl-tRNA(Gln) + L-glutamine + ATP + H2O = L-glutaminyl-tRNA(Gln) + L-glutamate + ADP + phosphate + H(+). Its function is as follows. Allows the formation of correctly charged Gln-tRNA(Gln) through the transamidation of misacylated Glu-tRNA(Gln) in organisms which lack glutaminyl-tRNA synthetase. The reaction takes place in the presence of glutamine and ATP through an activated gamma-phospho-Glu-tRNA(Gln). The protein is Glutamyl-tRNA(Gln) amidotransferase subunit A of Listeria monocytogenes serotype 4a (strain HCC23).